Reading from the N-terminus, the 416-residue chain is Glutamyl-tRNA reductase (416 aa).

Residues 49–52 (TCNR), Ser105, 110–112 (EPQ), and Gln116 contribute to the substrate site. Cys50 acts as the Nucleophile in catalysis. 185–190 (GAGETI) is an NADP(+) binding site.

Belongs to the glutamyl-tRNA reductase family. In terms of assembly, homodimer.

The catalysed reaction is (S)-4-amino-5-oxopentanoate + tRNA(Glu) + NADP(+) = L-glutamyl-tRNA(Glu) + NADPH + H(+). It functions in the pathway porphyrin-containing compound metabolism; protoporphyrin-IX biosynthesis; 5-aminolevulinate from L-glutamyl-tRNA(Glu): step 1/2. Functionally, catalyzes the NADPH-dependent reduction of glutamyl-tRNA(Glu) to glutamate 1-semialdehyde (GSA). The chain is Glutamyl-tRNA reductase from Shewanella denitrificans (strain OS217 / ATCC BAA-1090 / DSM 15013).